A 57-amino-acid polypeptide reads, in one-letter code: UPF0391 membrane protein HNE_2348 (57 aa).

2 helical membrane passes run 4 to 24 (WALTFFILAIIAALLGFGGIA) and 27 to 47 (AASIAKILFFVFLALLVITFV).

This sequence belongs to the UPF0391 family.

The protein resides in the cell membrane. The polypeptide is UPF0391 membrane protein HNE_2348 (Hyphomonas neptunium (strain ATCC 15444)).